The following is a 433-amino-acid chain: CinA-like protein (433 aa).

The protein belongs to the CinA family.

This Frankia casuarinae (strain DSM 45818 / CECT 9043 / HFP020203 / CcI3) protein is CinA-like protein.